A 204-amino-acid polypeptide reads, in one-letter code: Guanylate kinase (204 aa).

The region spanning 5 to 184 is the Guanylate kinase-like domain; the sequence is GLLLVLSGPS…AVNHIKAIVD (180 aa). An ATP-binding site is contributed by 12–19; it reads GPSGVGKG.

This sequence belongs to the guanylate kinase family.

The protein resides in the cytoplasm. It carries out the reaction GMP + ATP = GDP + ADP. Its function is as follows. Essential for recycling GMP and indirectly, cGMP. This Lactobacillus delbrueckii subsp. bulgaricus (strain ATCC 11842 / DSM 20081 / BCRC 10696 / JCM 1002 / NBRC 13953 / NCIMB 11778 / NCTC 12712 / WDCM 00102 / Lb 14) protein is Guanylate kinase.